Here is a 59-residue protein sequence, read N- to C-terminus: MAKLKITLVRSISKLNESQTATVRALGLRKRGSCVEQQDTPQIRGMIKKVEHVLSVEEI.

The protein belongs to the universal ribosomal protein uL30 family. Part of the 50S ribosomal subunit.

This chain is Large ribosomal subunit protein uL30, found in Acetivibrio thermocellus (strain ATCC 27405 / DSM 1237 / JCM 9322 / NBRC 103400 / NCIMB 10682 / NRRL B-4536 / VPI 7372) (Clostridium thermocellum).